The primary structure comprises 241 residues: tRNA pseudouridine synthase A (241 aa).

The active-site Nucleophile is the D51. Position 110 (Y110) interacts with substrate.

It belongs to the tRNA pseudouridine synthase TruA family. In terms of assembly, homodimer.

The catalysed reaction is uridine(38/39/40) in tRNA = pseudouridine(38/39/40) in tRNA. Formation of pseudouridine at positions 38, 39 and 40 in the anticodon stem and loop of transfer RNAs. The chain is tRNA pseudouridine synthase A from Campylobacter jejuni subsp. doylei (strain ATCC BAA-1458 / RM4099 / 269.97).